Reading from the N-terminus, the 150-residue chain is Endoribonuclease YbeY (150 aa).

Zn(2+)-binding residues include histidine 116, histidine 120, and histidine 126.

It belongs to the endoribonuclease YbeY family. Requires Zn(2+) as cofactor.

The protein localises to the cytoplasm. In terms of biological role, single strand-specific metallo-endoribonuclease involved in late-stage 70S ribosome quality control and in maturation of the 3' terminus of the 16S rRNA. This Beutenbergia cavernae (strain ATCC BAA-8 / DSM 12333 / CCUG 43141 / JCM 11478 / NBRC 16432 / NCIMB 13614 / HKI 0122) protein is Endoribonuclease YbeY.